A 518-amino-acid polypeptide reads, in one-letter code: GMP synthase [glutamine-hydrolyzing] (518 aa).

In terms of domain architecture, Glutamine amidotransferase type-1 spans 6–200 (RLLIIDFGSQ…FVRLAGFKGD (195 aa)). Cys-84 acts as the Nucleophile in catalysis. Catalysis depends on residues His-175 and Glu-177. One can recognise a GMPS ATP-PPase domain in the interval 201 to 393 (WTMGAYREEA…LGLPESFIGR (193 aa)). 228–234 (SGGVDSS) is a binding site for ATP.

In terms of assembly, homodimer.

It catalyses the reaction XMP + L-glutamine + ATP + H2O = GMP + L-glutamate + AMP + diphosphate + 2 H(+). The protein operates within purine metabolism; GMP biosynthesis; GMP from XMP (L-Gln route): step 1/1. Its function is as follows. Catalyzes the synthesis of GMP from XMP. This Cereibacter sphaeroides (strain ATCC 17029 / ATH 2.4.9) (Rhodobacter sphaeroides) protein is GMP synthase [glutamine-hydrolyzing].